We begin with the raw amino-acid sequence, 291 residues long: Proline iminopeptidase (291 aa).

The 245-residue stretch at 30–274 (LLIHGGPGSS…ANSRHLALLD (245 aa)) folds into the AB hydrolase-1 domain. Ser103 functions as the Nucleophile in the catalytic mechanism. Asp242 is an active-site residue. His269 functions as the Proton donor in the catalytic mechanism.

This sequence belongs to the peptidase S33 family.

It localises to the cell envelope. The enzyme catalyses Release of N-terminal proline from a peptide.. Functionally, releases the N-terminal proline from various substrates. This chain is Proline iminopeptidase, found in Lacticaseibacillus rhamnosus (strain Lc 705) (Lactobacillus rhamnosus).